A 199-amino-acid polypeptide reads, in one-letter code: NAD(P)H dehydrogenase (quinone) (199 aa).

A Flavodoxin-like domain is found at 4 to 190 (ILVLYYSSWG…EGARFQGKRL (187 aa)). FMN contacts are provided by residues 10-15 (SSWGHM) and 78-80 (TRY). Trp-12 lines the NAD(+) pocket. Trp-98 serves as a coordination point for substrate. FMN contacts are provided by residues 113 to 119 (STATQHG) and His-134. Residues 155–175 (VRGGAPYGMTTTSDTDGSRMP) are disordered.

This sequence belongs to the WrbA family. FMN is required as a cofactor.

It carries out the reaction a quinone + NADH + H(+) = a quinol + NAD(+). The enzyme catalyses a quinone + NADPH + H(+) = a quinol + NADP(+). The protein is NAD(P)H dehydrogenase (quinone) of Chelativorans sp. (strain BNC1).